We begin with the raw amino-acid sequence, 64 residues long: Large ribosomal subunit protein bL32 (64 aa).

Positions 1-35 are disordered; it reads MAVQKSRVTPSRRGQRRSHDALTAKQLSTDPTSGE.

It belongs to the bacterial ribosomal protein bL32 family.

In Xanthomonas axonopodis pv. citri (strain 306), this protein is Large ribosomal subunit protein bL32.